We begin with the raw amino-acid sequence, 433 residues long: Alpha-(1-&gt;3)-arabinofuranosyltransferase (433 aa).

Helical transmembrane passes span 118–138 (LFISINTAAILVAAYLLLRMF), 140–160 (FTLTSVAAPALILAMFATETV), 164–184 (LVFTNINGCILLLEVLFLRWL), 197–217 (LAIGLTLVLKPLLGPLLLLPL), 224–244 (ALVAAVVVPVVVNVAALPLVS), 280–300 (WLILFLRILFTAITFGALWLL), 310–330 (LFWFTTSSGVLLLWSWLVMSL), 333–353 (GYYSMMLFPFLMTVVLPNSVI), 356–376 (WPAWLGVYGFMTLDRWLLFNW), and 385–405 (YLKITYGWSLLLIVTFTVLYF).

This sequence belongs to the glycosyltransferase 87 family.

Its subcellular location is the cell membrane. It carries out the reaction Adds an alpha-D-arabinofuranosyl group from trans,octacis-decaprenylphospho-beta-D-arabinofuranose at the 3-O-position of an alpha-(1-&gt;5)-arabinofuranan chain attached to a beta-(1-&gt;5)-galactofuranan chain.. It participates in cell wall biogenesis; cell wall polysaccharide biosynthesis. Involved in the biosynthesis of the arabinogalactan (AG) region of the mycolylarabinogalactan-peptidoglycan (mAGP) complex, an essential component of the mycobacterial cell wall. Catalyzes the addition of an arabinofuranosyl (Araf) residue from the sugar donor beta-D-arabinofuranosyl-1-monophosphoryldecaprenol (DPA) on the C-3 of an alpha-(1-&gt;5)-linked Araf from the arabinan backbone of AG. The chain is Alpha-(1-&gt;3)-arabinofuranosyltransferase (aftC) from Mycobacterium tuberculosis (strain CDC 1551 / Oshkosh).